A 134-amino-acid chain; its full sequence is Phosphoribosyl-AMP cyclohydrolase (134 aa).

Aspartate 77 contacts Mg(2+). Cysteine 78 lines the Zn(2+) pocket. Residues aspartate 79 and aspartate 81 each coordinate Mg(2+). Positions 95 and 102 each coordinate Zn(2+).

The protein belongs to the PRA-CH family. As to quaternary structure, homodimer. Mg(2+) serves as cofactor. The cofactor is Zn(2+).

The protein localises to the cytoplasm. The catalysed reaction is 1-(5-phospho-beta-D-ribosyl)-5'-AMP + H2O = 1-(5-phospho-beta-D-ribosyl)-5-[(5-phospho-beta-D-ribosylamino)methylideneamino]imidazole-4-carboxamide. Its pathway is amino-acid biosynthesis; L-histidine biosynthesis; L-histidine from 5-phospho-alpha-D-ribose 1-diphosphate: step 3/9. Catalyzes the hydrolysis of the adenine ring of phosphoribosyl-AMP. This chain is Phosphoribosyl-AMP cyclohydrolase, found in Pseudomonas aeruginosa (strain UCBPP-PA14).